We begin with the raw amino-acid sequence, 151 residues long: MKKIDVKILDPRVGQQFPLPTYATSGSAGLDLRACLDDAVELAPGATTLVPTGLAIHIADPSLAAVMLPRSGLGHKHGIVLGNLVGLIDSDYQGQLMVSIWNRGQDSFTIEPGERIAQMVFVPVVQAEFNLVEAFDATERGEGGFGHSGRK.

Substrate-binding positions include 70 to 72 (RSG), asparagine 83, 87 to 89 (LID), and methionine 97.

It belongs to the dUTPase family. It depends on Mg(2+) as a cofactor.

The enzyme catalyses dUTP + H2O = dUMP + diphosphate + H(+). The protein operates within pyrimidine metabolism; dUMP biosynthesis; dUMP from dCTP (dUTP route): step 2/2. Its function is as follows. This enzyme is involved in nucleotide metabolism: it produces dUMP, the immediate precursor of thymidine nucleotides and it decreases the intracellular concentration of dUTP so that uracil cannot be incorporated into DNA. The protein is Deoxyuridine 5'-triphosphate nucleotidohydrolase of Salmonella enteritidis PT4 (strain P125109).